The primary structure comprises 299 residues: Ribosomal RNA small subunit methyltransferase H 1 (299 aa).

Residues 31 to 33, aspartate 50, phenylalanine 76, aspartate 97, and glutamine 104 contribute to the S-adenosyl-L-methionine site; that span reads GGH.

It belongs to the methyltransferase superfamily. RsmH family.

Its subcellular location is the cytoplasm. The enzyme catalyses cytidine(1402) in 16S rRNA + S-adenosyl-L-methionine = N(4)-methylcytidine(1402) in 16S rRNA + S-adenosyl-L-homocysteine + H(+). In terms of biological role, specifically methylates the N4 position of cytidine in position 1402 (C1402) of 16S rRNA. The sequence is that of Ribosomal RNA small subunit methyltransferase H 1 from Acholeplasma laidlawii (strain PG-8A).